Consider the following 600-residue polypeptide: Pyranose dehydrogenase 3 (600 aa).

An N-terminal signal peptide occupies residues 1–25; that stretch reads MLPRVARLNTHLVSLALLGFQITYG. 2 N-linked (GlcNAc...) asparagine glycosylation sites follow: asparagine 99 and asparagine 114. Histidine 127 is modified (tele-8alpha-FAD histidine). Asparagine 173, asparagine 199, asparagine 275, asparagine 342, asparagine 399, and asparagine 507 each carry an N-linked (GlcNAc...) asparagine glycan. The Proton acceptor role is filled by histidine 535. Asparagine 546 carries N-linked (GlcNAc...) asparagine glycosylation. The active site involves histidine 579.

It belongs to the GMC oxidoreductase family. As to quaternary structure, monomer. The cofactor is FAD. In terms of processing, N-glycosylated.

It is found in the secreted. It catalyses the reaction pyranose + acceptor = pyranos-2-ulose + reduced acceptor.. The enzyme catalyses pyranose + acceptor = pyranos-3-ulose + reduced acceptor.. It carries out the reaction pyranose + acceptor = pyranos-2,3-diulose + reduced acceptor.. The catalysed reaction is a pyranoside + acceptor = a pyranosid-3-ulose + reduced acceptor.. It catalyses the reaction a pyranoside + acceptor = a pyranosid-3,4-diulose + reduced acceptor.. Its function is as follows. Catalyzes the single-oxidation or sequential double oxidation reaction of carbohydrates primarily at carbon-2 and/or carbon-3 with the concomitant reduction of the flavin. The enzyme exhibits a broad sugar substrate specificity, oxidizing different aldopyranoses to the corresponding C-1, C-2, C-3 or C-1,2, C-2,3 and C-3,4 (di)dehydro sugars with substrate-specific regioselectivity. Accepts only a narrow range of electron acceptors such as substituted benzoquinones and complexed metal ions and reacts extremely slowly with O(2) as acceptor. May play a role in the natural recycling of plant matter by oxidizing all major monosaccharides in lignocellulose and by reducing quinone compounds or reactive radical species generated during lignin depolymerization. The sequence is that of Pyranose dehydrogenase 3 from Leucoagaricus meleagris (Western flat-topped agaric).